The primary structure comprises 1398 residues: DNA topoisomerase 2 (1398 aa).

ATP contacts are provided by residues N69, N103, 131 to 133 (SDN), and 144 to 151 (GRNGFGAK). The interval 260–317 (NSNDNKNNKGQNDNNNNNNNNNDENANQNNDNLDVSLSNEPADGTPTKNNNNNNNNND) is disordered. The segment covering 267-291 (NKGQNDNNNNNNNNNDENANQNNDN) has biased composition (low complexity). 411–413 (QTK) is an ATP binding site. The region spanning 493 to 608 (CTLILTEGDS…SLLKHKGFLS (116 aa)) is the Toprim domain. Mg(2+) is bound by residues E499, D577, and D579. The 453-residue stretch at 739–1191 (IPNIMDGWKP…TVETMWLKDI (453 aa)) folds into the Topo IIA-type catalytic domain. Y830 acts as the O-(5'-phospho-DNA)-tyrosine intermediate in catalysis. The interaction with DNA stretch occupies residues 1012–1021 (KLKSTLTTTN). Disordered stretches follow at residues 1214-1250 (KFKV…SDSS) and 1262-1361 (NTNK…NSSI). The segment covering 1262 to 1276 (NTNKKTTTSSNNVNN) has biased composition (low complexity). Polar residues-rich tracts occupy residues 1287–1300 (LNSN…SVSK) and 1348–1357 (DSTNDNNSEL).

This sequence belongs to the type II topoisomerase family. Homodimer. Mg(2+) is required as a cofactor. The cofactor is Mn(2+). It depends on Ca(2+) as a cofactor.

It is found in the nucleus. It carries out the reaction ATP-dependent breakage, passage and rejoining of double-stranded DNA.. In terms of biological role, control of topological states of DNA by transient breakage and subsequent rejoining of DNA strands. Topoisomerase II makes double-strand breaks. The sequence is that of DNA topoisomerase 2 (TOP2) from Plasmodium falciparum (isolate K1 / Thailand).